The chain runs to 445 residues: MSNRKYFGTDGIRGKVGDTPITPDFVLKLGWAAGKVLARHGSRKIIIGKDTRISGYMLESALEAGLAAAGLSASFTGPMPTPAVAYLTRTFRAEAGIVISASHNPYYDNGIKFFSIDGTKLPDDVEEAIEAEMEKPLTCVESSELGKASRIVDAAGRYIEFCKGTFPGELSLNGLKIVVDCANGATYHIAPSVLRELGAKVIAIGCEPDGMNINEECGATDVRQLQARVLAEKADVGLAFDGDGDRLIMVDHLGNKVDGDQILYIIAREGLRQGQLRGGAVGTLMSNMGLEVALKQLGIPFARAKVGDRYVLEMMQTKGWRIGAENSGHVILLDKTTTGDGVIAGLQVLTAIVKNHMSLHDLCSGMKLFPQILVNVRFTGENDPLEDKSVQQITQDVEKELAGRGRVLLRKSGTEPLIRVMVEGEHEETVIAQANRIADAVKAVS.

The Phosphoserine intermediate role is filled by S102. Positions 102, 241, 243, and 245 each coordinate Mg(2+). S102 is modified (phosphoserine).

It belongs to the phosphohexose mutase family. Requires Mg(2+) as cofactor. In terms of processing, activated by phosphorylation.

The catalysed reaction is alpha-D-glucosamine 1-phosphate = D-glucosamine 6-phosphate. Catalyzes the conversion of glucosamine-6-phosphate to glucosamine-1-phosphate. The chain is Phosphoglucosamine mutase from Pectobacterium atrosepticum (strain SCRI 1043 / ATCC BAA-672) (Erwinia carotovora subsp. atroseptica).